A 408-amino-acid chain; its full sequence is uncharacterized protein (408 aa).

The next 12 membrane-spanning stretches (helical) occupy residues W9–F29, V49–I69, I77–N97, V100–T120, L135–W155, T167–M187, L216–A236, G252–S272, S283–I303, L308–T328, L340–V360, and Y373–V393.

Belongs to the major facilitator superfamily.

It is found in the cell membrane. This is an uncharacterized protein from Bacillus subtilis (strain 168).